Reading from the N-terminus, the 527-residue chain is MPPVKAEDLVVHAVKEQFAGLDYCITSPPPWITTVLVGFQHYLVMLGTTVLIATIIVPLMGGGHAEKAIVIQTILFLSGINTLLQVHFGTRLPAVMSGSYTYIYPAVAIILSPRYALLIDPLERFVFTMRSLQGALIIAGVFQAVVGFFGIWRVFIRFLSPLAAVPFVTLTGLGLFFFAFPGVTKCIEVGLPALVLLVIFAEYASHLFAKGSFVFSRCAVLVTVVIIWIYAEILTAAGAYNERGPVTQFSCRADRSGIIQGSPWVRFPYPFQWGYPIFCFQDCFAMLAASFASLIESTGTLIAVSRYSGATFCPPSVFSRGIGWEGISIILDGMCGTLTGTAASVENAGLLAVTRVGSRRVIKISALFMIFFSLFAKFGAVLASIPLPIFAALYCVLFAYSAGAGFSLLQYCNLNSLRTKFILSISLFLGLSIPQYFRVYEMFFGFGPVHTHSVAFNVMVNVIFSSPATVAAILAYLLDCTHLYWEASVKKDRGWFWWEKFKSYKYDGRSEEFYRLPYGLSRYFPSL.

The next 12 helical transmembrane spans lie at 43–63, 68–88, 92–112, 132–152, 163–183, 189–209, 219–239, 284–304, 361–383, 387–409, 427–447, and 458–478; these read LVMLGTTVLIATIIVPLMGGG, AIVIQTILFLSGINTLLQVHF, LPAVMSGSYTYIYPAVAIILS, LQGALIIAGVFQAVVGFFGIW, AAVPFVTLTGLGLFFFAFPGV, VGLPALVLLVIFAEYASHLFA, AVLVTVVIIWIYAEILTAAGA, FAMLAASFASLIESTGTLIAV, VIKISALFMIFFSLFAKFGAVLA, LPIFAALYCVLFAYSAGAGFSLL, LFLGLSIPQYFRVYEMFFGFG, and VMVNVIFSSPATVAAILAYLL.

The protein belongs to the nucleobase:cation symporter-2 (NCS2) (TC 2.A.40) family. In terms of tissue distribution, highly expressed in roots.

It localises to the membrane. With respect to regulation, inhibited by excess of xanthin, uric acid and ascorbic acid, and by 100 um N,N-dicyclohexylcarbodiimide and 30 um carbonyl cyanide m-chlorophenyl-hydrazone. Its function is as follows. High affinity uric acid-xanthine transporter in A.nidulans. Binds, but cannot transport ascorbic acid. The sequence is that of Nucleobase-ascorbate transporter LPE1 (LPE1) from Zea mays (Maize).